The sequence spans 255 residues: uncharacterized protein (255 aa).

Belongs to the methyltransferase superfamily.

This is an uncharacterized protein from Mycolicibacterium gilvum (strain PYR-GCK) (Mycobacterium gilvum (strain PYR-GCK)).